The chain runs to 311 residues: Methionyl-tRNA formyltransferase (311 aa).

Position 110 to 113 (110 to 113 (SLLP)) interacts with (6S)-5,6,7,8-tetrahydrofolate.

It belongs to the Fmt family.

It catalyses the reaction L-methionyl-tRNA(fMet) + (6R)-10-formyltetrahydrofolate = N-formyl-L-methionyl-tRNA(fMet) + (6S)-5,6,7,8-tetrahydrofolate + H(+). Functionally, attaches a formyl group to the free amino group of methionyl-tRNA(fMet). The formyl group appears to play a dual role in the initiator identity of N-formylmethionyl-tRNA by promoting its recognition by IF2 and preventing the misappropriation of this tRNA by the elongation apparatus. The protein is Methionyl-tRNA formyltransferase of Streptococcus uberis (strain ATCC BAA-854 / 0140J).